The primary structure comprises 564 residues: Type 2 DNA topoisomerase 6 subunit B (564 aa).

ATP is bound by residues N46, D78, 99–100 (TK), 109–116 (GQQGIGIS), and K471.

This sequence belongs to the TOP6B family. As to quaternary structure, homodimer. Heterotetramer of two Top6A and two Top6B chains.

The enzyme catalyses ATP-dependent breakage, passage and rejoining of double-stranded DNA.. Its function is as follows. Relaxes both positive and negative superturns and exhibits a strong decatenase activity. This chain is Type 2 DNA topoisomerase 6 subunit B, found in Pyrococcus abyssi (strain GE5 / Orsay).